A 678-amino-acid chain; its full sequence is Inositol-trisphosphate 3-kinase C (678 aa).

2 disordered regions span residues Leu26–Ser128 and Asp151–Ser300. Positions Pro44–Pro58 are enriched in gly residues. Basic and acidic residues-rich tracts occupy residues Trp61 to Leu76 and Glu107 to Asp116. Ser160 carries the post-translational modification Phosphoserine. 2 stretches are compositionally biased toward basic and acidic residues: residues Glu173–Arg196 and Ser220–Asp236. The Nuclear export signal motif lies at Leu318–Ile326. The segment at Pro328–Ser380 is disordered. A Phosphothreonine modification is found at Thr330. A Phosphoserine modification is found at Ser398. Residues Lys426, Glu466–Leu468, and Asp479 each bind ATP. Residues Lys481, Arg502 to Lys508, and Lys529 to Arg536 each bind substrate. A calmodulin-binding region spans residues Asp504–Val512. Residues Lys553 and Asp633 each coordinate ATP. Lys636 contacts substrate.

This sequence belongs to the inositol phosphokinase (IPK) family.

It localises to the nucleus. The protein localises to the cytoplasm. The enzyme catalyses 1D-myo-inositol 1,4,5-trisphosphate + ATP = 1D-myo-inositol 1,3,4,5-tetrakisphosphate + ADP + H(+). With respect to regulation, activated by calcium/calmodulin. Inhibited by high concentrations of the substrate Ins(1,2,4)P3, and allosterically activated by the product Ins(1,3,4,5)P4. Catalyzes the phosphorylation of 1D-myo-inositol 1,4,5-trisphosphate (InsP3) into 1D-myo-inositol 1,3,4,5-tetrakisphosphate and participates to the regulation of calcium homeostasis. Can phosphorylate inositol 2,4,5-triphosphate to inositol 2,4,5,6-tetraphosphate. In Mus musculus (Mouse), this protein is Inositol-trisphosphate 3-kinase C (Itpkc).